Here is a 479-residue protein sequence, read N- to C-terminus: Glutamyl-tRNA(Gln) amidotransferase subunit A (479 aa).

Active-site charge relay system residues include Lys71 and Ser146. The active-site Acyl-ester intermediate is Ser170.

The protein belongs to the amidase family. GatA subfamily. As to quaternary structure, heterotrimer of A, B and C subunits.

The enzyme catalyses L-glutamyl-tRNA(Gln) + L-glutamine + ATP + H2O = L-glutaminyl-tRNA(Gln) + L-glutamate + ADP + phosphate + H(+). Allows the formation of correctly charged Gln-tRNA(Gln) through the transamidation of misacylated Glu-tRNA(Gln) in organisms which lack glutaminyl-tRNA synthetase. The reaction takes place in the presence of glutamine and ATP through an activated gamma-phospho-Glu-tRNA(Gln). The protein is Glutamyl-tRNA(Gln) amidotransferase subunit A of Lactobacillus acidophilus (strain ATCC 700396 / NCK56 / N2 / NCFM).